The following is a 1239-amino-acid chain: WD repeat-containing protein 11 (1239 aa).

WD repeat units follow at residues 63–112, 115–158, 358–398, 476–515, 571–610, 713–750, 752–792, 798–836, and 898–944; these read RHKA…AHCE, EHSK…KLWK, TKTV…SKSS, RMCP…LHKE, NDEP…LLRE, GSMG…SRGV, THRG…MVSS, NVNY…ASYR, and SLSN…IQAF. The interval 1213-1239 is disordered; it reads EDLSQTEGTGTESSPADDTDNSLVNIE. A compositionally biased stretch (polar residues) spans 1215–1226; it reads LSQTEGTGTESS.

In terms of assembly, component of the complex WDR11.

Its subcellular location is the cytoplasm. The protein resides in the cytoskeleton. It localises to the cilium basal body. The protein localises to the nucleus. It is found in the cilium axoneme. Its subcellular location is the cytoplasmic vesicle. The protein resides in the golgi apparatus. It localises to the trans-Golgi network. In terms of biological role, involved in the Hedgehog (Hh) signaling pathway, is essential for normal ciliogenesis. Regulates the proteolytic processing of gli3 and cooperates with the transcription factor emx1 in the induction of downstream Hh pathway gene expression and gonadotropin-releasing hormone production. WDR11 complex facilitates the tethering of Adaptor protein-1 complex (AP-1)-derived vesicles. The protein is WD repeat-containing protein 11 (wdr11) of Danio rerio (Zebrafish).